The sequence spans 304 residues: Killer cell immunoglobulin-like receptor 2DS4 (304 aa).

Residues 1–21 form the signal peptide; it reads MSLMVIIMACVGFFLLQGAWP. Residues 22–245 are Extracellular-facing; it reads QEGVHRKPSF…SKTGNPRHLH (224 aa). 2 consecutive Ig-like C2-type domains span residues 42–107 and 142–205; these read EETV…VPHS and GENV…FRDA. A disulfide bond links Cys-49 and Cys-100. Residues Asn-67, Asn-84, Asn-144, Asn-178, and Asn-211 are each glycosylated (N-linked (GlcNAc...) asparagine). The cysteines at positions 149 and 198 are disulfide-linked. The segment at 220-239 is disordered; the sequence is VTGNPSNSWPSPTEPSSKTG. A helical transmembrane segment spans residues 246–265; that stretch reads VLIGTSVVKIPFTILLFFLL. Residues 266–304 are Cytoplasmic-facing; sequence HRWCSDKKNAAVMDQEPAGNRTVNSEDSDEQDHQEVSYA. The segment at 280-304 is disordered; sequence QEPAGNRTVNSEDSDEQDHQEVSYA.

This sequence belongs to the immunoglobulin superfamily. As to quaternary structure, interacts with HLA-F; this interaction is direct.

Its subcellular location is the cell membrane. Functionally, receptor on natural killer (NK) cells for HLA-C alleles. Does not inhibit the activity of NK cells. The protein is Killer cell immunoglobulin-like receptor 2DS4 of Homo sapiens (Human).